A 55-amino-acid polypeptide reads, in one-letter code: MAVPKFKKSRANTRARRSQWKADNVELQTQKINGQEVQIPRRLVKAAQLGLIDLD.

A compositionally biased stretch (basic residues) spans 1-19 (MAVPKFKKSRANTRARRSQ). A disordered region spans residues 1-22 (MAVPKFKKSRANTRARRSQWKA).

The protein belongs to the bacterial ribosomal protein bL32 family.

This chain is Large ribosomal subunit protein bL32, found in Corynebacterium urealyticum (strain ATCC 43042 / DSM 7109).